The primary structure comprises 111 residues: UPF0060 membrane protein XAC3064 (111 aa).

4 helical membrane passes run 8–28 (LLLFAATALAELVGCYLPYLW), 32–52 (GGSVWLLLPTALSLAVFVWLL), 64–84 (AAYGGVYIASALLWLWWVDGV), and 91–111 (LLGAACCLLGMAVIMFSPRSA).

This sequence belongs to the UPF0060 family.

The protein resides in the cell inner membrane. The sequence is that of UPF0060 membrane protein XAC3064 from Xanthomonas axonopodis pv. citri (strain 306).